Here is an 807-residue protein sequence, read N- to C-terminus: Probable phosphoketolase (807 aa).

The protein belongs to the XFP family. Thiamine diphosphate is required as a cofactor.

This is Probable phosphoketolase from Mesorhizobium japonicum (strain LMG 29417 / CECT 9101 / MAFF 303099) (Mesorhizobium loti (strain MAFF 303099)).